Here is a 191-residue protein sequence, read N- to C-terminus: Transcription factor FapR (191 aa).

Belongs to the FapR family.

In terms of biological role, transcriptional factor involved in regulation of membrane lipid biosynthesis by repressing genes involved in fatty acid and phospholipid metabolism. The polypeptide is Transcription factor FapR (Oceanobacillus iheyensis (strain DSM 14371 / CIP 107618 / JCM 11309 / KCTC 3954 / HTE831)).